The following is a 204-amino-acid chain: High frequency lysogenization protein HflD homolog (204 aa).

The protein belongs to the HflD family.

It is found in the cytoplasm. The protein resides in the cell inner membrane. This is High frequency lysogenization protein HflD homolog from Stenotrophomonas maltophilia (strain R551-3).